The following is a 125-amino-acid chain: Urotensin-2 (125 aa).

Residues 1 to 20 (MYKLASCCLLFIGFLNPLFS) form the signal peptide. Residues 21 to 111 (LPLLDSGEVS…HLLARIRKPY (91 aa)) constitute a propeptide that is removed on maturation. An intrachain disulfide couples C119 to C124.

It belongs to the urotensin-2 family.

The protein resides in the secreted. Functionally, highly potent vasoconstrictor. In Macaca mulatta (Rhesus macaque), this protein is Urotensin-2 (UTS2).